A 211-amino-acid chain; its full sequence is Protein G12 (211 aa).

An N-terminal signal peptide occupies residues 1 to 19 (MKIAAFVVACLVATSAVSC).

This is Protein G12 from Anopheles gambiae (African malaria mosquito).